A 110-amino-acid chain; its full sequence is Insulin (110 aa).

The first 24 residues, 1–24, serve as a signal peptide directing secretion; it reads MAPWTRLLPLLALLSLWIPAPTRA. 3 disulfide bridges follow: Cys31–Cys96, Cys43–Cys109, and Cys95–Cys100. A propeptide spans 57-87 (c peptide); the sequence is EAEDLQGKDAELGEAPGAGGLQPSALEAPLQ. Residues 60 to 80 are disordered; the sequence is DLQGKDAELGEAPGAGGLQPS.

It belongs to the insulin family. Heterodimer of a B chain and an A chain linked by two disulfide bonds.

The protein resides in the secreted. Its function is as follows. Insulin decreases blood glucose concentration. It increases cell permeability to monosaccharides, amino acids and fatty acids. It accelerates glycolysis, the pentose phosphate cycle, and glycogen synthesis in liver. This Felis catus (Cat) protein is Insulin (INS).